Consider the following 433-residue polypeptide: Glutamate-1-semialdehyde 2,1-aminomutase (433 aa).

The residue at position 273 (Lys273) is an N6-(pyridoxal phosphate)lysine.

This sequence belongs to the class-III pyridoxal-phosphate-dependent aminotransferase family. HemL subfamily. Homodimer. Pyridoxal 5'-phosphate serves as cofactor.

The protein resides in the cytoplasm. The enzyme catalyses (S)-4-amino-5-oxopentanoate = 5-aminolevulinate. It functions in the pathway porphyrin-containing compound metabolism; protoporphyrin-IX biosynthesis; 5-aminolevulinate from L-glutamyl-tRNA(Glu): step 2/2. This Ralstonia pickettii (strain 12J) protein is Glutamate-1-semialdehyde 2,1-aminomutase.